The following is a 245-amino-acid chain: MADS-box transcription factor 55 (245 aa).

Residues 1–61 (MARERREIRR…GKLSQFASSN (61 aa)) form the MADS-box domain. The 91-residue stretch at 109 to 199 (LQLEHSKCSS…RDQMPQVPTA (91 aa)) folds into the K-box domain. The interval 197–245 (PTAGLAVPDTENVLTEDGQSSESVMTALNSGSSQDNDDGSDISLKLGLP) is disordered. Polar residues predominate over residues 213-224 (DGQSSESVMTAL).

As to expression, expressed in roots, shoots and developing panicles. Expressed in shoots.

It localises to the nucleus. Its function is as follows. Transcription factor that acts as a negative regulator of brassinosteroid signaling. The sequence is that of MADS-box transcription factor 55 (MADS55) from Oryza sativa subsp. japonica (Rice).